Reading from the N-terminus, the 210-residue chain is Large ribosomal subunit protein uL4 (210 aa).

Residues 56-80 are disordered; it reads FVSGGGKKPWRQKGTGRARAGSTRS.

Belongs to the universal ribosomal protein uL4 family. As to quaternary structure, part of the 50S ribosomal subunit.

Functionally, one of the primary rRNA binding proteins, this protein initially binds near the 5'-end of the 23S rRNA. It is important during the early stages of 50S assembly. It makes multiple contacts with different domains of the 23S rRNA in the assembled 50S subunit and ribosome. In terms of biological role, forms part of the polypeptide exit tunnel. This Solidesulfovibrio magneticus (strain ATCC 700980 / DSM 13731 / RS-1) (Desulfovibrio magneticus) protein is Large ribosomal subunit protein uL4.